The following is a 402-amino-acid chain: MSRVSQARNLGKYFLLIDNMLVVLGFFVVFPLISIRFVDQMGWAAVMVGIALGLRQFIQQGLGIFGGAIADRFGAKPMIVTGMLMRAAGFATMGIAHEPWLLWFSCLLSGLGGTLFDPPRSALVVKLIRPQQRGRFFSLLMMQDSASAVIGALLGSWLLQYDFRLVCATGPVLFVLCAAFNAWLLPAWKLSTVRTPVREGMTRVMRDKRFVTYVLTLAGYYMLAVQVMLMLPIMVNDVAGAPSAVKWMYAIEACLSLTLLYPIARWSEKHFRLEHRLMAGLLIMSLSMMPVGMVSGLQQLFTLICLFYIGSIIAEPARETLSASLADARARGSYMGFSRLGLAIGGAIGYIGGGWLFDLGKSAHQPELPWMMLGIIGIFTFLALGWQFSQKRAARRLLERDA.

Residues 1 to 12 (MSRVSQARNLGK) lie on the Cytoplasmic side of the membrane. The helical transmembrane segment at 13 to 33 (YFLLIDNMLVVLGFFVVFPLI) threads the bilayer. At 34–98 (SIRFVDQMGW…GFATMGIAHE (65 aa)) the chain is on the periplasmic side. Residues 99–116 (PWLLWFSCLLSGLGGTLF) form a helical membrane-spanning segment. The Cytoplasmic segment spans residues 117 to 138 (DPPRSALVVKLIRPQQRGRFFS). Residues 139 to 159 (LLMMQDSASAVIGALLGSWLL) form a helical membrane-spanning segment. At 160–164 (QYDFR) the chain is on the periplasmic side. A helical membrane pass occupies residues 165–185 (LVCATGPVLFVLCAAFNAWLL). Residues 186-213 (PAWKLSTVRTPVREGMTRVMRDKRFVTY) are Cytoplasmic-facing. The chain crosses the membrane as a helical span at residues 214 to 234 (VLTLAGYYMLAVQVMLMLPIM). The Periplasmic segment spans residues 235–243 (VNDVAGAPS). Residues 244–264 (AVKWMYAIEACLSLTLLYPIA) traverse the membrane as a helical segment. The Cytoplasmic portion of the chain corresponds to 265-276 (RWSEKHFRLEHR). Residues 277–297 (LMAGLLIMSLSMMPVGMVSGL) form a helical membrane-spanning segment. The Periplasmic segment spans residues 298 to 299 (QQ). A helical membrane pass occupies residues 300-320 (LFTLICLFYIGSIIAEPARET). The Cytoplasmic segment spans residues 321 to 339 (LSASLADARARGSYMGFSR). Residues 340–360 (LGLAIGGAIGYIGGGWLFDLG) traverse the membrane as a helical segment. At 361–367 (KSAHQPE) the chain is on the periplasmic side. Residues 368–388 (LPWMMLGIIGIFTFLALGWQF) traverse the membrane as a helical segment. Residues 389 to 402 (SQKRAARRLLERDA) lie on the Cytoplasmic side of the membrane.

Belongs to the major facilitator superfamily. DHA1 family. MdtH (TC 2.A.1.2.21) subfamily.

It is found in the cell inner membrane. The sequence is that of Multidrug resistance protein MdtH from Shigella flexneri serotype 5b (strain 8401).